A 593-amino-acid chain; its full sequence is Kelch-like protein 2 (593 aa).

The segment at 1 to 28 (METPPLPPACTKQGHQKPLDSKDDNTEK) is disordered. The span at 17 to 28 (KPLDSKDDNTEK) shows a compositional bias: basic and acidic residues. In terms of domain architecture, BTB spans 56–123 (CDVTIVAEDM…VYTAEIQVTE (68 aa)). Kelch repeat units lie at residues 308–353 (LMVV…YMAG), 354–400 (LVFA…VLNG), 402–447 (LYAV…VVGG), 449–496 (LYAV…VLNN), 497–543 (LLYA…AVNG), and 545–591 (LYVV…VIDK).

As to quaternary structure, component of the BCR(KLHL2) E3 ubiquitin ligase complex, at least composed of CUL3 and KLHL2 and RBX1. Binds actin. Interacts with KLHL12. Interacts (via N-terminus) with FYN (via SH3 domain). As to expression, ubiquitous. Detected throughout the brain.

The protein resides in the cytoplasm. The protein localises to the cytoskeleton. Its subcellular location is the cell projection. It is found in the ruffle. It localises to the lamellipodium. The protein resides in the cytosol. The protein operates within protein modification; protein ubiquitination. Functionally, substrate-specific adapter of a BCR (BTB-CUL3-RBX1) E3 ubiquitin ligase complex that mediates the ubiquitination of target proteins, such as NPTXR, WNK1, WNK3 and WNK4, leading most often to their proteasomal degradation. The BCR(KLHL2) complex catalyzes ubiquitination and degradation of NPTXR. Responsible for degradative ubiquitination of the WNK kinases WNK1, WNK3 and WNK4. Plays a role in the reorganization of the actin cytoskeleton. Promotes growth of cell projections in oligodendrocyte precursors. The polypeptide is Kelch-like protein 2 (Homo sapiens (Human)).